The following is a 403-amino-acid chain: Eukaryotic translation initiation factor 3 subunit H (403 aa).

The region spanning 57–206 (VRLDGLALTK…VKAYRLSPSF (150 aa)) is the MPN domain. A disordered region spans residues 99–122 (ALPNPGRSNSERDEEEDRSSRNAT).

Belongs to the eIF-3 subunit H family. Component of the eukaryotic translation initiation factor 3 (eIF-3) complex.

The protein resides in the cytoplasm. Functionally, component of the eukaryotic translation initiation factor 3 (eIF-3) complex, which is involved in protein synthesis of a specialized repertoire of mRNAs and, together with other initiation factors, stimulates binding of mRNA and methionyl-tRNAi to the 40S ribosome. The eIF-3 complex specifically targets and initiates translation of a subset of mRNAs involved in cell proliferation. This chain is Eukaryotic translation initiation factor 3 subunit H, found in Mycosarcoma maydis (Corn smut fungus).